The chain runs to 353 residues: Holliday junction branch migration complex subunit RuvB (353 aa).

Residues 1 to 25 (MDPGPAGDEVSLAPQQETAEQDVET) form a disordered region. Residues 1-188 (MDPGPAGDEV…FGFTAHMEFY (188 aa)) are large ATPase domain (RuvB-L). ATP is bound by residues Leu-27, Arg-28, Gly-69, Lys-72, Thr-73, Ser-74, 135-137 (EDY), Arg-178, Tyr-188, and Arg-225. A Mg(2+)-binding site is contributed by Thr-73. Positions 189–259 (EPAELELVVR…VARAALEVYD (71 aa)) are small ATPAse domain (RuvB-S). The tract at residues 262-353 (EHGLDRLDRA…ATRSLFADEV (92 aa)) is head domain (RuvB-H). Arg-317 and Arg-322 together coordinate DNA.

Belongs to the RuvB family. As to quaternary structure, homohexamer. Forms an RuvA(8)-RuvB(12)-Holliday junction (HJ) complex. HJ DNA is sandwiched between 2 RuvA tetramers; dsDNA enters through RuvA and exits via RuvB. An RuvB hexamer assembles on each DNA strand where it exits the tetramer. Each RuvB hexamer is contacted by two RuvA subunits (via domain III) on 2 adjacent RuvB subunits; this complex drives branch migration. In the full resolvosome a probable DNA-RuvA(4)-RuvB(12)-RuvC(2) complex forms which resolves the HJ.

The protein localises to the cytoplasm. It carries out the reaction ATP + H2O = ADP + phosphate + H(+). Its function is as follows. The RuvA-RuvB-RuvC complex processes Holliday junction (HJ) DNA during genetic recombination and DNA repair, while the RuvA-RuvB complex plays an important role in the rescue of blocked DNA replication forks via replication fork reversal (RFR). RuvA specifically binds to HJ cruciform DNA, conferring on it an open structure. The RuvB hexamer acts as an ATP-dependent pump, pulling dsDNA into and through the RuvAB complex. RuvB forms 2 homohexamers on either side of HJ DNA bound by 1 or 2 RuvA tetramers; 4 subunits per hexamer contact DNA at a time. Coordinated motions by a converter formed by DNA-disengaged RuvB subunits stimulates ATP hydrolysis and nucleotide exchange. Immobilization of the converter enables RuvB to convert the ATP-contained energy into a lever motion, pulling 2 nucleotides of DNA out of the RuvA tetramer per ATP hydrolyzed, thus driving DNA branch migration. The RuvB motors rotate together with the DNA substrate, which together with the progressing nucleotide cycle form the mechanistic basis for DNA recombination by continuous HJ branch migration. Branch migration allows RuvC to scan DNA until it finds its consensus sequence, where it cleaves and resolves cruciform DNA. In Saccharopolyspora erythraea (strain ATCC 11635 / DSM 40517 / JCM 4748 / NBRC 13426 / NCIMB 8594 / NRRL 2338), this protein is Holliday junction branch migration complex subunit RuvB.